The sequence spans 500 residues: NADH-quinone oxidoreductase subunit N (500 aa).

14 helical membrane-spanning segments follow: residues 6–26 (SWIA…IALV), 40–60 (ALTL…ALGG), 69–89 (MVVV…ALMI), 106–125 (GGEF…VMIS), 129–151 (FLVL…ALRR), 164–184 (FVLG…LYGA), 207–227 (LVFG…AVPF), 239–259 (PTAV…AMTI), 276–296 (MLAL…VAQT), 302–322 (LAFS…AGVV), 337–357 (MFYA…ILLL), 380–400 (YAGV…LVGF), 417–437 (SYLV…FYYL), and 464–484 (IVLA…SSLM).

Belongs to the complex I subunit 2 family. As to quaternary structure, NDH-1 is composed of 14 different subunits. Subunits NuoA, H, J, K, L, M, N constitute the membrane sector of the complex.

It localises to the cell inner membrane. It catalyses the reaction a quinone + NADH + 5 H(+)(in) = a quinol + NAD(+) + 4 H(+)(out). NDH-1 shuttles electrons from NADH, via FMN and iron-sulfur (Fe-S) centers, to quinones in the respiratory chain. The immediate electron acceptor for the enzyme in this species is believed to be ubiquinone. Couples the redox reaction to proton translocation (for every two electrons transferred, four hydrogen ions are translocated across the cytoplasmic membrane), and thus conserves the redox energy in a proton gradient. This is NADH-quinone oxidoreductase subunit N from Polaromonas naphthalenivorans (strain CJ2).